Reading from the N-terminus, the 120-residue chain is MDVSNKVSRALTQEIETLANISRESGSKLWRDIAERLASRRRGYASVNLSKIDKYAKDGDIIVVPGYVLGVGKISKKVTVGAYKFSKTAMEKLSNSGCAFMNISEIAKDNPKGTNVKIMR.

The protein belongs to the eukaryotic ribosomal protein eL18 family.

The protein is Large ribosomal subunit protein eL18 of Thermoplasma acidophilum (strain ATCC 25905 / DSM 1728 / JCM 9062 / NBRC 15155 / AMRC-C165).